The sequence spans 973 residues: Vacuolar membrane protease (973 aa).

At 1-15 the chain is on the cytoplasmic side; it reads MARQYSRTNPLGFTP. The helical transmembrane segment at 16–36 threads the bilayer; it reads WPVTIITALVYLALVIPLLVV. Over 37–383 the chain is Vacuolar; it reads QHVVPSAPGS…STLAVFELHT (347 aa). 2 N-linked (GlcNAc...) asparagine glycosylation sites follow: asparagine 52 and asparagine 115. Zn(2+) is bound by residues histidine 167 and aspartate 179. Glutamate 213 (proton acceptor) is an active-site residue. Zn(2+)-binding residues include glutamate 214, glutamate 239, and histidine 312. A helical membrane pass occupies residues 384-404; it reads LFALSVTLLIVAPLVLLATSI. The Cytoplasmic portion of the chain corresponds to 405 to 438; it reads ALVRADRMYLFRSTARVPGSDDFDEGVSLQGVRG. Residues 439 to 459 traverse the membrane as a helical segment; sequence FFRFPFLLVIPTGVAVGLAYL. Topologically, residues 460 to 469 are vacuolar; that stretch reads VTKINPYIIH. Residues 470–490 form a helical membrane-spanning segment; the sequence is SSEYAVWSMMISAWVFLAWFV. Over 491 to 504 the chain is Cytoplasmic; sequence SRVADFARPSAFHR. A helical membrane pass occupies residues 505–525; that stretch reads VYVLTWMFVAEWVLLVIATVY. The Vacuolar portion of the chain corresponds to 526–529; sequence ENRY. Residues 530 to 550 form a helical membrane-spanning segment; it reads GLAGGYFVFFALSGTFLATWI. At 551-674 the chain is on the cytoplasmic side; that stretch reads SYLELFALPR…GLPKWTWVLQ (124 aa). The tract at residues 572-623 is disordered; that stretch reads SRYASNHGSRLGTSSGEHGMDDAEDEEDDDGDDEDEARNVEEEPTESTSLLR. Residues 574–587 are compositionally biased toward polar residues; sequence YASNHGSRLGTSSG. A compositionally biased stretch (acidic residues) spans 593-607; sequence DAEDEEDDDGDDEDE. The helical transmembrane segment at 675–695 threads the bilayer; the sequence is FLLSAPIVLILVGPLALLLTA. Residues 696–708 lie on the Vacuolar side of the membrane; that stretch reads ALRQTAQDGSSPL. A helical transmembrane segment spans residues 709-729; that stretch reads FVYIAIAVLTTLLVTPLLPFI. Over 730–735 the chain is Cytoplasmic; the sequence is HRYTHH. Residues 736–756 traverse the membrane as a helical segment; it reads IPLFLLLVFTGTLIYNLVAFP. Topologically, residues 757–973 are vacuolar; the sequence is FSPSNRLKLF…LVEGSRRFEV (217 aa). N-linked (GlcNAc...) asparagine glycosylation is found at asparagine 803 and asparagine 839.

Belongs to the peptidase M28 family. The cofactor is Zn(2+).

It is found in the vacuole membrane. Functionally, may be involved in vacuolar sorting and osmoregulation. This chain is Vacuolar membrane protease, found in Aspergillus clavatus (strain ATCC 1007 / CBS 513.65 / DSM 816 / NCTC 3887 / NRRL 1 / QM 1276 / 107).